A 283-amino-acid chain; its full sequence is Bifunctional protein FolD (283 aa).

NADP(+)-binding positions include G163 to S165, S188, and I229.

Belongs to the tetrahydrofolate dehydrogenase/cyclohydrolase family. Homodimer.

The enzyme catalyses (6R)-5,10-methylene-5,6,7,8-tetrahydrofolate + NADP(+) = (6R)-5,10-methenyltetrahydrofolate + NADPH. It catalyses the reaction (6R)-5,10-methenyltetrahydrofolate + H2O = (6R)-10-formyltetrahydrofolate + H(+). Its pathway is one-carbon metabolism; tetrahydrofolate interconversion. Catalyzes the oxidation of 5,10-methylenetetrahydrofolate to 5,10-methenyltetrahydrofolate and then the hydrolysis of 5,10-methenyltetrahydrofolate to 10-formyltetrahydrofolate. This chain is Bifunctional protein FolD, found in Latilactobacillus sakei subsp. sakei (strain 23K) (Lactobacillus sakei subsp. sakei).